A 108-amino-acid chain; its full sequence is Thiosulfate sulfurtransferase GlpE (108 aa).

The region spanning 17–105 (KDGSAALVDI…WARQYPQDVE (89 aa)) is the Rhodanese domain. Cysteine 65 serves as the catalytic Cysteine persulfide intermediate.

This sequence belongs to the GlpE family.

The protein localises to the cytoplasm. It catalyses the reaction thiosulfate + hydrogen cyanide = thiocyanate + sulfite + 2 H(+). It carries out the reaction thiosulfate + [thioredoxin]-dithiol = [thioredoxin]-disulfide + hydrogen sulfide + sulfite + 2 H(+). Transferase that catalyzes the transfer of sulfur from thiosulfate to thiophilic acceptors such as cyanide or dithiols. May function in a CysM-independent thiosulfate assimilation pathway by catalyzing the conversion of thiosulfate to sulfite, which can then be used for L-cysteine biosynthesis. This Serratia proteamaculans (strain 568) protein is Thiosulfate sulfurtransferase GlpE.